The sequence spans 389 residues: S-adenosylmethionine synthase (389 aa).

Histidine 19 contributes to the ATP binding site. A Mg(2+)-binding site is contributed by aspartate 21. Position 47 (glutamate 47) interacts with K(+). Glutamate 60 and glutamine 103 together coordinate L-methionine. Residues 103–113 (QSVDIAQGVDR) are flexible loop. ATP is bound by residues 168-170 (DGK), 234-235 (RF), aspartate 243, 249-250 (RK), alanine 266, and lysine 270. Position 243 (aspartate 243) interacts with L-methionine. Lysine 274 lines the L-methionine pocket.

This sequence belongs to the AdoMet synthase family. In terms of assembly, homotetramer; dimer of dimers. Mg(2+) serves as cofactor. The cofactor is K(+).

It is found in the cytoplasm. The catalysed reaction is L-methionine + ATP + H2O = S-adenosyl-L-methionine + phosphate + diphosphate. It functions in the pathway amino-acid biosynthesis; S-adenosyl-L-methionine biosynthesis; S-adenosyl-L-methionine from L-methionine: step 1/1. Catalyzes the formation of S-adenosylmethionine (AdoMet) from methionine and ATP. The overall synthetic reaction is composed of two sequential steps, AdoMet formation and the subsequent tripolyphosphate hydrolysis which occurs prior to release of AdoMet from the enzyme. The sequence is that of S-adenosylmethionine synthase from Maridesulfovibrio salexigens (strain ATCC 14822 / DSM 2638 / NCIMB 8403 / VKM B-1763) (Desulfovibrio salexigens).